We begin with the raw amino-acid sequence, 105 residues long: Large ribosomal subunit protein uL24 (105 aa).

This sequence belongs to the universal ribosomal protein uL24 family. In terms of assembly, part of the 50S ribosomal subunit.

In terms of biological role, one of two assembly initiator proteins, it binds directly to the 5'-end of the 23S rRNA, where it nucleates assembly of the 50S subunit. Functionally, one of the proteins that surrounds the polypeptide exit tunnel on the outside of the subunit. The chain is Large ribosomal subunit protein uL24 from Lachnoclostridium phytofermentans (strain ATCC 700394 / DSM 18823 / ISDg) (Clostridium phytofermentans).